The primary structure comprises 131 residues: Transcriptional activatory protein CaiF (131 aa).

Functionally, potential transcriptional activator of carnitine metabolism. This is Transcriptional activatory protein CaiF (caiF) from Escherichia coli (strain K12).